A 389-amino-acid polypeptide reads, in one-letter code: Large envelope protein (389 aa).

M1 carries the N-acetylmethionine modification. G2 is lipidated: N-myristoyl glycine; by host. The tract at residues 2-108 is pre-S1; the sequence is GTNLSVPNPL…PPLRDTHPQA (107 aa). The tract at residues 2-163 is pre-S; the sequence is GTNLSVPNPL…LSKTGDPVPN (162 aa). Residues 2–170 are Virion surface; in external conformation-facing; sequence GTNLSVPNPL…VPNMENIASG (169 aa). Topologically, residues 2-242 are intravirion; in internal conformation; that stretch reads GTNLSVPNPL…PGYRWMCLRR (241 aa). The disordered stretch occupies residues 74-103; the sequence is LTTVPAAPPPASTNRQSGRQPTPLSPPLRD. Polar residues predominate over residues 85-95; sequence STNRQSGRQPT. A pre-S2 region spans residues 109–163; that stretch reads MQWNSTTFHQTLQDPGVRALYFPAGGSSSGTVSPAQNTVSAISSILSKTGDPVPN. The helical transmembrane segment at 171–191 threads the bilayer; it reads LLGPLLVLQAGFFLLTKILTI. The Intravirion; in external conformation segment spans residues 192 to 242; sequence PQSLDSWWTSLNFLGGTPVCLGQNSQSQISSHSPTCCPPICPGYRWMCLRR. A helical transmembrane segment spans residues 243–263; the sequence is FIIFLCILLLCLIFLLVLLDY. Residues 264-337 are Virion surface-facing; it reads QGMLPVCPLI…WASVRFSWLS (74 aa). Residue N309 is glycosylated (N-linked (GlcNAc...) asparagine; by host). The chain crosses the membrane as a helical span at residues 338 to 358; that stretch reads LLVPFVQWFVGLSPTVWLSVI. Residues 359–364 lie on the Intravirion side of the membrane; sequence WMIWFW. Residues 365–387 traverse the membrane as a helical segment; that stretch reads GPSLYNILSPFMPLLPIFFCLWV. Topologically, residues 388 to 389 are virion surface; that stretch reads YI.

Belongs to the orthohepadnavirus major surface antigen family. Interacts (via its myristoylated pre-S1 region) with the host SLC10A1/NTCP; this interaction is essential for viral entry. In terms of assembly, in its internal form (Li-HBsAg), interacts with the capsid protein and with the isoform S. Interacts with host chaperone CANX. As to quaternary structure, associates with host chaperone CANX through its pre-S2 N glycan; this association may be essential for isoform M proper secretion. Interacts with isoform L. Interacts with the antigens of satellite virus HDV (HDVAgs); this interaction is required for encapsidation of HDV genomic RNA. Post-translationally, isoform M is N-terminally acetylated by host at a ratio of 90%, and N-glycosylated by host at the pre-S2 region. Myristoylated; this modification is essential for its interaction with the host protein SLC10A1/NTCP.

It is found in the virion membrane. The large envelope protein exists in two topological conformations, one which is termed 'external' or Le-HBsAg and the other 'internal' or Li-HBsAg. In its external conformation the protein attaches the virus to cell receptors and thereby initiating infection. This interaction determines the species specificity and liver tropism. This attachment induces virion internalization predominantly through caveolin-mediated endocytosis. The large envelope protein also assures fusion between virion membrane and endosomal membrane. In its internal conformation the protein plays a role in virion morphogenesis and mediates the contact with the nucleocapsid like a matrix protein. Functionally, the middle envelope protein plays an important role in the budding of the virion. It is involved in the induction of budding in a nucleocapsid independent way. In this process the majority of envelope proteins bud to form subviral lipoprotein particles of 22 nm of diameter that do not contain a nucleocapsid. In Hepatitis B virus genotype B/C subtype adw (isolate Okinawa/pODW282/1998) (HBV-B), this protein is Large envelope protein.